The chain runs to 248 residues: UPF0246 protein A1G_03985 (248 aa).

It belongs to the UPF0246 family.

This Rickettsia rickettsii (strain Sheila Smith) protein is UPF0246 protein A1G_03985.